The chain runs to 245 residues: Phosducin (245 aa).

The span at 1-14 shows a compositional bias: acidic residues; sequence MEEAKSQSLEEDFE. The tract at residues 1-68 is disordered; the sequence is MEEAKSQSLE…RDNKDSKERF (68 aa). Residues 1–241 form the Phosducin domain; that stretch reads MEEAKSQSLE…THALDQTNME (241 aa). A compositionally biased stretch (basic and acidic residues) spans 59–68; sequence RDNKDSKERF. Phosphoserine; by PKA is present on Ser73. Residues 111–245 are thioredoxin fold; that stretch reads YGFVYELETG…DQTNMEEDIE (135 aa).

The protein belongs to the phosducin family. As to quaternary structure, interacts with CRX. Forms a complex with the beta and gamma subunits of the GTP-binding protein, transducin. Post-translationally, light-induced changes in cyclic nucleotide levels modulate the phosphorylation of this protein by cAMP kinase.

The protein resides in the cytoplasm. Its subcellular location is the cytosol. The protein localises to the nucleus. It is found in the cell projection. It localises to the cilium. The protein resides in the photoreceptor outer segment. Its subcellular location is the photoreceptor inner segment. Its function is as follows. Inhibits the transcriptional activation activity of the cone-rod homeobox CRX. May participate in the regulation of visual phototransduction or in the integration of photoreceptor metabolism. This Felis catus (Cat) protein is Phosducin (PDC).